Reading from the N-terminus, the 693-residue chain is Probable L-type lectin-domain containing receptor kinase VI.1 (693 aa).

The N-terminal stretch at 1–22 is a signal peptide; the sequence is MGIARSINSFMFFFFLMILSNA. N-linked (GlcNAc...) asparagine glycosylation is found at Asn21, Asn44, Asn71, Asn89, Asn141, Asn180, and Asn223. Residues 23–311 lie on the Extracellular side of the membrane; the sequence is SKSSVLAEAT…SNKKGYNSQV (289 aa). The tract at residues 33–279 is legume-lectin like; the sequence is TAKFTFIGFK…AHYVMGWSFS (247 aa). The helical transmembrane segment at 312–332 threads the bilayer; that stretch reads IVLIVALSIVTLVLLVLLFIF. At 333–693 the chain is on the cytoplasmic side; sequence VMYKRRIQEE…VSSSSIVSGR (361 aa). The region spanning 368-642 is the Protein kinase domain; the sequence is FKESEIIGTG…LRYLNGEENV (275 aa). ATP-binding positions include 374 to 382 and Lys396; that span reads IGTGGFGIV. Asp495 functions as the Proton acceptor in the catalytic mechanism. The tract at residues 670 to 693 is disordered; the sequence is DRASSSNTFSSFSNVSSSSIVSGR.

It in the C-terminal section; belongs to the protein kinase superfamily. Ser/Thr protein kinase family. In the N-terminal section; belongs to the leguminous lectin family.

Its subcellular location is the cell membrane. The enzyme catalyses L-seryl-[protein] + ATP = O-phospho-L-seryl-[protein] + ADP + H(+). The catalysed reaction is L-threonyl-[protein] + ATP = O-phospho-L-threonyl-[protein] + ADP + H(+). This chain is Probable L-type lectin-domain containing receptor kinase VI.1 (LECRK61), found in Arabidopsis thaliana (Mouse-ear cress).